Consider the following 462-residue polypeptide: Fumarate hydratase class II (462 aa).

Substrate-binding positions include 98-100, R126, 129-132, 139-141, and T187; these read SGT, HPND, and SSN. The segment at 120–141 is disordered; the sequence is GTRGKGRKVHPNDHVNKGQSSN. The active-site Proton donor/acceptor is the H188. Residue S318 is part of the active site. Residues S319 and 324–326 contribute to the substrate site; that span reads KVN.

This sequence belongs to the class-II fumarase/aspartase family. Fumarase subfamily. In terms of assembly, homotetramer.

Its subcellular location is the cytoplasm. It carries out the reaction (S)-malate = fumarate + H2O. It functions in the pathway carbohydrate metabolism; tricarboxylic acid cycle; (S)-malate from fumarate: step 1/1. Its function is as follows. Involved in the TCA cycle. Catalyzes the stereospecific interconversion of fumarate to L-malate. This Nitrosomonas europaea (strain ATCC 19718 / CIP 103999 / KCTC 2705 / NBRC 14298) protein is Fumarate hydratase class II.